We begin with the raw amino-acid sequence, 62 residues long: DNA-directed RNA polymerase subunit Rpo10 (62 aa).

Zn(2+) is bound by residues Cys6, Cys9, Cys43, and Cys44.

It belongs to the archaeal Rpo10/eukaryotic RPB10 RNA polymerase subunit family. As to quaternary structure, part of the RNA polymerase complex. The cofactor is Zn(2+).

The protein resides in the cytoplasm. It catalyses the reaction RNA(n) + a ribonucleoside 5'-triphosphate = RNA(n+1) + diphosphate. In terms of biological role, DNA-dependent RNA polymerase (RNAP) catalyzes the transcription of DNA into RNA using the four ribonucleoside triphosphates as substrates. This Methanosarcina barkeri (strain Fusaro / DSM 804) protein is DNA-directed RNA polymerase subunit Rpo10.